Consider the following 361-residue polypeptide: Probable mannose-1-phosphate guanylyltransferase 1 (361 aa).

GDP-alpha-D-mannose is bound by residues L6 and V7. The diphosphate site is built by G9, G11, T12, R13, and K23. Residues G85, N109, D111, G146, and N173 each coordinate GDP-alpha-D-mannose.

The protein belongs to the transferase hexapeptide repeat family.

The catalysed reaction is alpha-D-mannose 1-phosphate + GTP + H(+) = GDP-alpha-D-mannose + diphosphate. It functions in the pathway nucleotide-sugar biosynthesis; GDP-alpha-D-mannose biosynthesis; GDP-alpha-D-mannose from alpha-D-mannose 1-phosphate (GTP route): step 1/1. In terms of biological role, catalyzes a reaction of the Smirnoff-Wheeler pathway, the major route to ascorbate biosynthesis in plants. The chain is Probable mannose-1-phosphate guanylyltransferase 1 from Oryza sativa subsp. japonica (Rice).